The chain runs to 277 residues: Diaminopimelate epimerase (277 aa).

Substrate contacts are provided by N11 and N62. C71 serves as the catalytic Proton donor. Substrate-binding positions include 72–73, N160, N193, and 211–212; these read GN and ER. The active-site Proton acceptor is C220. Residue 221 to 222 coordinates substrate; that stretch reads GT.

This sequence belongs to the diaminopimelate epimerase family. Homodimer.

The protein localises to the cytoplasm. The catalysed reaction is (2S,6S)-2,6-diaminopimelate = meso-2,6-diaminopimelate. It participates in amino-acid biosynthesis; L-lysine biosynthesis via DAP pathway; DL-2,6-diaminopimelate from LL-2,6-diaminopimelate: step 1/1. Functionally, catalyzes the stereoinversion of LL-2,6-diaminopimelate (L,L-DAP) to meso-diaminopimelate (meso-DAP), a precursor of L-lysine. This is Diaminopimelate epimerase from Methanococcus maripaludis (strain C5 / ATCC BAA-1333).